A 508-amino-acid chain; its full sequence is Photosystem II CP47 reaction center protein (508 aa).

A run of 6 helical transmembrane segments spans residues 21–36 (SVHI…WAGS), 101–115 (IVFS…IWHW), 140–156 (GIHL…FGAF), 203–218 (IAAG…FHLS), 237–252 (VLSS…AFIV), and 457–472 (TFAL…HGAR).

This sequence belongs to the PsbB/PsbC family. PsbB subfamily. As to quaternary structure, PSII is composed of 1 copy each of membrane proteins PsbA, PsbB, PsbC, PsbD, PsbE, PsbF, PsbH, PsbI, PsbJ, PsbK, PsbL, PsbM, PsbT, PsbX, PsbY, PsbZ, Psb30/Ycf12, at least 3 peripheral proteins of the oxygen-evolving complex and a large number of cofactors. It forms dimeric complexes. Binds multiple chlorophylls. PSII binds additional chlorophylls, carotenoids and specific lipids. serves as cofactor.

The protein resides in the plastid. It is found in the chloroplast thylakoid membrane. Its function is as follows. One of the components of the core complex of photosystem II (PSII). It binds chlorophyll and helps catalyze the primary light-induced photochemical processes of PSII. PSII is a light-driven water:plastoquinone oxidoreductase, using light energy to abstract electrons from H(2)O, generating O(2) and a proton gradient subsequently used for ATP formation. In Pinus thunbergii (Japanese black pine), this protein is Photosystem II CP47 reaction center protein.